The sequence spans 187 residues: Dihydrofolate reductase (187 aa).

In terms of domain architecture, DHFR spans 4–185 (PLNCIVAVSQ…IKYKFEVYEK (182 aa)). NADP(+)-binding positions include A10 and 16-22 (GIGKNGD). 31–36 (EFQYFQ) is a substrate binding site. Residue 55–57 (RKT) participates in NADP(+) binding. R71 serves as a coordination point for substrate. NADP(+) contacts are provided by residues 77–79 (SRE) and 117–124 (GGSSVYKE).

Belongs to the dihydrofolate reductase family. Homodimer.

It localises to the mitochondrion. Its subcellular location is the cytoplasm. It carries out the reaction (6S)-5,6,7,8-tetrahydrofolate + NADP(+) = 7,8-dihydrofolate + NADPH + H(+). Its pathway is cofactor biosynthesis; tetrahydrofolate biosynthesis; 5,6,7,8-tetrahydrofolate from 7,8-dihydrofolate: step 1/1. Functionally, key enzyme in folate metabolism. Contributes to the de novo mitochondrial thymidylate biosynthesis pathway. Catalyzes an essential reaction for de novo glycine and purine synthesis, and for DNA precursor synthesis. Binds its own mRNA and that of DHFR2. This is Dihydrofolate reductase (DHFR) from Bos taurus (Bovine).